We begin with the raw amino-acid sequence, 971 residues long: MELSDANLQTLTEYLKKTLDPDPAIRRPAEKFLESVEGNQNYPLLLLTLLEKSQDNVIKVCASVTFKNYIKRNWRIVEDEPNKICEADRVAIKANIVHLMLSSPEQIQKQLSDAISIIGREDFPQKWPDLLTEMVNRFQSGDFHVINGVLRTAHSLFKRYRHEFKSNELWTEIKLVLDAFALPLTNLFKATIELCSTHANDASALRILFSSLILISKLFYSLNFQDLPEFFEDNMETWMNNFHTLLTLDNKLLQTDDEEEAGLLELLKSQICDNAALYAQKYDEEFQRYLPRFVTAIWNLLVTTGQEVKYDLLVSNAIQFLASVCERPHYKNLFEDQNTLTSICEKVIVPNMEFRAADEEAFEDNSEEYIRRDLEGSDIDTRRRAACDLVRGLCKFFEGPVTGIFSGYVNSMLQEYAKNPSVNWKHKDAAIYLVTSLASKAQTQKHGITQANELVNLTEFFVNHILPDLKSANVNEFPVLKADGIKYIMIFRNQVPKEHLLVSIPLLINHLQAESIVVHTYAAHALERLFTMRGPNNATLFTAAEIAPFVEILLTNLFKALTLPGSSENEYIMKAIMRSFSLLQEAIIPYIPTLITQLTQKLLAVSKNPSKPHFNHYMFEAICLSIRITCKANPAAVVNFEEALFLVFTEILQNDVQEFIPYVFQVMSLLLETHKNDIPSSYMALFPHLLQPVLWERTGNIPALVRLLQAFLERGSNTIASAAADKIPGLLGVFQKLIASKANDHQGFYLLNSIIEHMPPESVDQYRKQIFILLFQRLQNSKTTKFIKSFLVFINLYCIKYGALALQEIFDGIQPKMFGMVLEKIIIPEIQKVSGNVEKKICAVGITKLLTECPPMMDTEYTKLWTPLLQSLIGLFELPEDDTIPDEEHFIDIEDTPGYQTAFSQLAFAGKKEHDPVGQMVNNPKIHLAQSLHKLSTACPGRVPSMVSTSLNAEALQYLQGYLQAASVTLL.

Methionine 1 is subject to N-acetylmethionine. Residues 29 to 102 form the Importin N-terminal domain; the sequence is AEKFLESVEG…KANIVHLMLS (74 aa). Phosphoserine is present on serine 112. Lysine 574 and lysine 824 each carry N6-acetyllysine. Residue serine 931 is modified to Phosphoserine.

It belongs to the XPO2/CSE1 family. As to quaternary structure, found in a complex with CSE1L/XPO2, Ran and KPNA2. Binds with high affinity to importin-alpha only in the presence of RanGTP. The complex is dissociated by the combined action of RanBP1 and RanGAP1. Interacts with CFTR. Detected in brain, placenta, ovary, testis and trachea (at protein level). Widely expressed. Highly expressed in testis and in proliferating cells.

It is found in the cytoplasm. It localises to the nucleus. Export receptor for importin-alpha. Mediates importin-alpha re-export from the nucleus to the cytoplasm after import substrates (cargos) have been released into the nucleoplasm. In the nucleus binds cooperatively to importin-alpha and to the GTPase Ran in its active GTP-bound form. Docking of this trimeric complex to the nuclear pore complex (NPC) is mediated through binding to nucleoporins. Upon transit of a nuclear export complex into the cytoplasm, disassembling of the complex and hydrolysis of Ran-GTP to Ran-GDP (induced by RANBP1 and RANGAP1, respectively) cause release of the importin-alpha from the export receptor. CSE1L/XPO2 then return to the nuclear compartment and mediate another round of transport. The directionality of nuclear export is thought to be conferred by an asymmetric distribution of the GTP- and GDP-bound forms of Ran between the cytoplasm and nucleus. The chain is Exportin-2 (CSE1L) from Homo sapiens (Human).